We begin with the raw amino-acid sequence, 380 residues long: Probable protein phosphatase 2C 34 (380 aa).

In terms of domain architecture, PPM-type phosphatase spans 32–335; that stretch reads AAGEFSMAAA…DDISVIVVYL (304 aa). Mn(2+) is bound by residues Asp66, Gly67, Asp267, and Asp326.

This sequence belongs to the PP2C family. Requires Mg(2+) as cofactor. Mn(2+) serves as cofactor.

The catalysed reaction is O-phospho-L-seryl-[protein] + H2O = L-seryl-[protein] + phosphate. The enzyme catalyses O-phospho-L-threonyl-[protein] + H2O = L-threonyl-[protein] + phosphate. In Oryza sativa subsp. indica (Rice), this protein is Probable protein phosphatase 2C 34 (BIPP2C2).